The chain runs to 185 residues: UPF0397 protein LJ_1703 (185 aa).

5 consecutive transmembrane segments (helical) span residues 6–26 (GLSV…VILA), 46–66 (FLAL…GFIG), 78–98 (TWWS…LYGM), 113–133 (IGFN…IAPV), and 147–167 (FLQG…LGTI).

The protein belongs to the UPF0397 family.

It is found in the cell membrane. The protein is UPF0397 protein LJ_1703 of Lactobacillus johnsonii (strain CNCM I-12250 / La1 / NCC 533).